Consider the following 145-residue polypeptide: D-aminoacyl-tRNA deacylase (145 aa).

Residues 137–138 (GP) carry the Gly-cisPro motif, important for rejection of L-amino acids motif.

It belongs to the DTD family. In terms of assembly, homodimer.

The protein resides in the cytoplasm. The catalysed reaction is glycyl-tRNA(Ala) + H2O = tRNA(Ala) + glycine + H(+). The enzyme catalyses a D-aminoacyl-tRNA + H2O = a tRNA + a D-alpha-amino acid + H(+). Its function is as follows. An aminoacyl-tRNA editing enzyme that deacylates mischarged D-aminoacyl-tRNAs. Also deacylates mischarged glycyl-tRNA(Ala), protecting cells against glycine mischarging by AlaRS. Acts via tRNA-based rather than protein-based catalysis; rejects L-amino acids rather than detecting D-amino acids in the active site. By recycling D-aminoacyl-tRNA to D-amino acids and free tRNA molecules, this enzyme counteracts the toxicity associated with the formation of D-aminoacyl-tRNA entities in vivo and helps enforce protein L-homochirality. The protein is D-aminoacyl-tRNA deacylase of Salmonella typhimurium (strain LT2 / SGSC1412 / ATCC 700720).